Consider the following 452-residue polypeptide: Protein tipE (452 aa).

The Cytoplasmic portion of the chain corresponds to 1–20 (MGDEQDKRTGKEKLLFYTTA). The chain crosses the membrane as a helical span at residues 21-41 (FFILLGTFSLFAFLFLVPFVI). Residues 42-274 (EPAFTTIFMQ…ISDLDYWQNT (233 aa)) lie on the Extracellular side of the membrane. 5 N-linked (GlcNAc...) asparagine glycosylation sites follow: Asn72, Asn102, Asn108, Asn212, and Asn237. The chain crosses the membrane as a helical span at residues 275–295 (LNLVYSMAIPIPSFIISVIYL). The Cytoplasmic portion of the chain corresponds to 296–452 (TYAYFKIYNE…STPPGPTAAV (157 aa)). Positions 423 to 444 (AISTSNSVQGNLSKTMTTSIST) are enriched in polar residues. A disordered region spans residues 423–452 (AISTSNSVQGNLSKTMTTSISTPPGPTAAV).

In terms of tissue distribution, preferentially expressed in the central nervous system of developing embryos, weaker expression is seen in the peripheral nervous system. In pupae and adults, expression is seen predominantly in heads, body and legs.

It localises to the membrane. Functionally, enhances para sodium channel function. Required during pupal development to rescue adult paralysis and also protects adult flies against heat-induced lethality. The sequence is that of Protein tipE (tipE) from Drosophila melanogaster (Fruit fly).